A 210-amino-acid chain; its full sequence is Probable GTP-binding protein EngB (210 aa).

The 175-residue stretch at 25–199 (CGIEVAFAGR…RQKLDSWFSE (175 aa)) folds into the EngB-type G domain. Residues 33-40 (GRSNAGKS), 60-64 (GRTQL), 78-81 (DLPG), 145-148 (TKAD), and 178-180 (FSS) each bind GTP. Positions 40 and 62 each coordinate Mg(2+).

It belongs to the TRAFAC class TrmE-Era-EngA-EngB-Septin-like GTPase superfamily. EngB GTPase family. Requires Mg(2+) as cofactor.

Functionally, necessary for normal cell division and for the maintenance of normal septation. The chain is Probable GTP-binding protein EngB from Salmonella dublin (strain CT_02021853).